Here is a 264-residue protein sequence, read N- to C-terminus: tRNA pseudouridine synthase A (264 aa).

The active-site Nucleophile is aspartate 51. Tyrosine 109 lines the substrate pocket.

It belongs to the tRNA pseudouridine synthase TruA family. As to quaternary structure, homodimer.

It catalyses the reaction uridine(38/39/40) in tRNA = pseudouridine(38/39/40) in tRNA. In terms of biological role, formation of pseudouridine at positions 38, 39 and 40 in the anticodon stem and loop of transfer RNAs. This chain is tRNA pseudouridine synthase A, found in Vibrio vulnificus (strain CMCP6).